Here is a 446-residue protein sequence, read N- to C-terminus: Trigger factor (446 aa).

The PPIase FKBP-type domain maps to 182–267; the sequence is GDKVVVDYQN…VKNIFMMKAI (86 aa).

It belongs to the FKBP-type PPIase family. Tig subfamily.

The protein localises to the cytoplasm. It catalyses the reaction [protein]-peptidylproline (omega=180) = [protein]-peptidylproline (omega=0). Involved in protein export. Acts as a chaperone by maintaining the newly synthesized protein in an open conformation. Functions as a peptidyl-prolyl cis-trans isomerase. The sequence is that of Trigger factor from Ehrlichia ruminantium (strain Gardel).